Consider the following 352-residue polypeptide: Homeobox protein Mohawk (352 aa).

Positions G19–D53 are disordered. The segment at residues V71 to V132 is a DNA-binding region (homeobox; TALE-type). Disordered stretches follow at residues L157–E194 and T245–E272.

The protein belongs to the TALE/IRO homeobox family.

The protein resides in the nucleus. Functionally, may act as a morphogenetic regulator of cell adhesion. This Pongo abelii (Sumatran orangutan) protein is Homeobox protein Mohawk (MKX).